The sequence spans 161 residues: MALNRNKKKKIIKKINNVANKSLSIITANPSKITVNIINKLRKKAKINNIKIYVIRNTLLKKSLKKTIFSKLINIIKGPILVGFSMKHPGSASRLFIKFNKKNINFKILNAIYEKKILNIHEIKDLANLPTHIESITKFVILLKEISLGKFIRVLQNITKK.

This sequence belongs to the universal ribosomal protein uL10 family. Part of the ribosomal stalk of the 50S ribosomal subunit. The N-terminus interacts with L11 and the large rRNA to form the base of the stalk. The C-terminus forms an elongated spine to which L12 dimers bind in a sequential fashion forming a multimeric L10(L12)X complex.

Its function is as follows. Forms part of the ribosomal stalk, playing a central role in the interaction of the ribosome with GTP-bound translation factors. This Buchnera aphidicola subsp. Cinara cedri (strain Cc) protein is Large ribosomal subunit protein uL10.